Here is a 206-residue protein sequence, read N- to C-terminus: Methyltransferase-like 26 (206 aa).

Belongs to the UPF0585 family.

The chain is Methyltransferase-like 26 from Danio rerio (Zebrafish).